The following is a 397-amino-acid chain: Protein EMSY-LIKE 3 (397 aa).

Positions 1–40 (MDYRPSDSSGTDDDLPPSHQGRYQRNARPTGNGRPSVLNS) are disordered. An ENT domain is found at 50-137 (METQIHLIEQ…PQLVHDAPSP (88 aa)). Residues 81–107 (ESLITELRKELRVSDEEHRELLSRVNA) adopt a coiled-coil conformation. 2 disordered regions span residues 122–221 (SLQS…SYDP) and 284–330 (DPGI…TQNG). A compositionally biased stretch (polar residues) spans 164-174 (LHPSMQPSSSA). Residues 175-182 (LRRGGPPP) carry the Nuclear localization signal motif. The stretch at 363-389 (AEVEKAKRVLRDHELALMDAIAKLEEI) forms a coiled coil. Ser390 is subject to Phosphoserine.

The protein localises to the nucleus. Functionally, probably involved in the regulation of chromatin states. Contributes to basal immunity. The sequence is that of Protein EMSY-LIKE 3 from Arabidopsis thaliana (Mouse-ear cress).